We begin with the raw amino-acid sequence, 439 residues long: Proline--tRNA ligase (439 aa).

This sequence belongs to the class-II aminoacyl-tRNA synthetase family. ProS type 2 subfamily. As to quaternary structure, homodimer.

It localises to the cytoplasm. It catalyses the reaction tRNA(Pro) + L-proline + ATP = L-prolyl-tRNA(Pro) + AMP + diphosphate. Functionally, catalyzes the attachment of proline to tRNA(Pro) in a two-step reaction: proline is first activated by ATP to form Pro-AMP and then transferred to the acceptor end of tRNA(Pro). The protein is Proline--tRNA ligase of Beijerinckia indica subsp. indica (strain ATCC 9039 / DSM 1715 / NCIMB 8712).